The chain runs to 55 residues: Large ribosomal subunit protein bL33 (55 aa).

Over residues 1 to 11 (MAKGGREKIKL) the composition is skewed to basic and acidic residues. The tract at residues 1–26 (MAKGGREKIKLESTAGTGHFYTTDKN) is disordered.

The protein belongs to the bacterial ribosomal protein bL33 family.

The chain is Large ribosomal subunit protein bL33 from Methylibium petroleiphilum (strain ATCC BAA-1232 / LMG 22953 / PM1).